A 122-amino-acid polypeptide reads, in one-letter code: UPF0102 protein Rleg2_4331 (122 aa).

This sequence belongs to the UPF0102 family.

The sequence is that of UPF0102 protein Rleg2_4331 from Rhizobium leguminosarum bv. trifolii (strain WSM2304).